The primary structure comprises 154 residues: SsrA-binding protein (154 aa).

The segment covering 123–142 has biased composition (basic and acidic residues); the sequence is AEHDKRHTIKDRDWQREQGR. The disordered stretch occupies residues 123-154; that stretch reads AEHDKRHTIKDRDWQREQGRLMRHKVSAPHKD. Positions 143 to 154 are enriched in basic residues; sequence LMRHKVSAPHKD.

This sequence belongs to the SmpB family.

The protein localises to the cytoplasm. In terms of biological role, required for rescue of stalled ribosomes mediated by trans-translation. Binds to transfer-messenger RNA (tmRNA), required for stable association of tmRNA with ribosomes. tmRNA and SmpB together mimic tRNA shape, replacing the anticodon stem-loop with SmpB. tmRNA is encoded by the ssrA gene; the 2 termini fold to resemble tRNA(Ala) and it encodes a 'tag peptide', a short internal open reading frame. During trans-translation Ala-aminoacylated tmRNA acts like a tRNA, entering the A-site of stalled ribosomes, displacing the stalled mRNA. The ribosome then switches to translate the ORF on the tmRNA; the nascent peptide is terminated with the 'tag peptide' encoded by the tmRNA and targeted for degradation. The ribosome is freed to recommence translation, which seems to be the essential function of trans-translation. This Leptothrix cholodnii (strain ATCC 51168 / LMG 8142 / SP-6) (Leptothrix discophora (strain SP-6)) protein is SsrA-binding protein.